A 259-amino-acid chain; its full sequence is Putative hydro-lyase Bphyt_4813 (259 aa).

It belongs to the D-glutamate cyclase family.

This Paraburkholderia phytofirmans (strain DSM 17436 / LMG 22146 / PsJN) (Burkholderia phytofirmans) protein is Putative hydro-lyase Bphyt_4813.